The chain runs to 174 residues: Achaete-scute homolog 3 (174 aa).

Positions 92–105 (AFIRKRNERERQRV) are basic motif. A bHLH domain is found at 92-144 (AFIRKRNERERQRVKCVNEGYARLRRHLPEDYLEKRLSKVETLRAAIKYISYL). The helix-loop-helix motif stretch occupies residues 106–144 (KCVNEGYARLRRHLPEDYLEKRLSKVETLRAAIKYISYL). The segment at 153-174 (SETKKNPRTASCGSLDPALRVI) is disordered.

In terms of assembly, efficient DNA binding requires dimerization with another bHLH protein. In terms of tissue distribution, expressed in the salivary duct cells. Also expressed at lower levels in testis and epididymis. Expressed in the olfactory epithelium (OE), in a subset of apical microvillar cells.

The protein resides in the nucleus. Its function is as follows. Transcriptional repressor. Inhibits myogenesis. Plays a role in progenitor cells which differentiate into ductal and acinar, but not myoepithelial, cell lineages in the salivary glands. Involved in the functions of the microvillar cells and Bowman's glands and probably, in a non-cell-autonomous manner, in the development or regeneration of a complete olfactory epithelium (OE). The polypeptide is Achaete-scute homolog 3 (Ascl3) (Mus musculus (Mouse)).